A 627-amino-acid polypeptide reads, in one-letter code: Carene synthase, chloroplastic (627 aa).

Residues 1 to 36 (MSVISIMPLASKPCLNKSFISSTHEPKALRRPISTV) constitute a chloroplast transit peptide. Mg(2+) contacts are provided by Asp378, Asp382, and Asp530. The short motif at 378-382 (DDMYD) is the DDXXD motif element.

The protein belongs to the terpene synthase family. Tpsd subfamily. Mg(2+) is required as a cofactor. Requires Mn(2+) as cofactor.

It is found in the plastid. The protein resides in the chloroplast. It catalyses the reaction (2E)-geranyl diphosphate = (+)-car-3-ene + diphosphate. The protein operates within terpene metabolism; oleoresin biosynthesis. Terpene synthase (TPS) involved in defensive oleoresin formation in conifers in response to insect attack or other injury. This is Carene synthase, chloroplastic (3CAR) from Picea glauca (White spruce).